Consider the following 206-residue polypeptide: Small ribosomal subunit protein uS4 (206 aa).

The S4 RNA-binding domain occupies 96 to 156 (GRLDNVVYRM…EKAKKQSRVK (61 aa)).

It belongs to the universal ribosomal protein uS4 family. In terms of assembly, part of the 30S ribosomal subunit. Contacts protein S5. The interaction surface between S4 and S5 is involved in control of translational fidelity.

Functionally, one of the primary rRNA binding proteins, it binds directly to 16S rRNA where it nucleates assembly of the body of the 30S subunit. With S5 and S12 plays an important role in translational accuracy. The polypeptide is Small ribosomal subunit protein uS4 (Yersinia enterocolitica serotype O:8 / biotype 1B (strain NCTC 13174 / 8081)).